Consider the following 259-residue polypeptide: HTH-type transcriptional regulator TtgV (259 aa).

The 63-residue stretch at 14 to 76 folds into the HTH iclR-type domain; the sequence is IQVIARAASI…GPAGGFRLGP (63 aa). Residues 36–59 constitute a DNA-binding region (H-T-H motif); that stretch reads LAAIAQLVGLPRSTVQRIINALEE. The IclR-ED domain maps to 89-253; that stretch reads ILSLVKPYLR…KLNIERAIGR (165 aa).

Functionally, represses the expression of the ttgGHI and ttgVW operons. Binds to the ttgGHI / ttgVW intergenic region, probably preventing binding of RNA polymerase; ttgV dissociates from this region in the presence of 1-hexanol. The chain is HTH-type transcriptional regulator TtgV (ttgV) from Pseudomonas putida (strain DOT-T1E).